We begin with the raw amino-acid sequence, 123 residues long: Ferredoxin-5 (123 aa).

A 2Fe-2S ferredoxin-type domain is found at 2-119; that stretch reads PNITFTSPIM…DVMVHFTGTP (118 aa). [2Fe-2S] cluster contacts are provided by cysteine 42, cysteine 47, cysteine 50, and cysteine 102.

The protein belongs to the 2Fe2S plant-type ferredoxin family. It depends on [2Fe-2S] cluster as a cofactor.

Functionally, ferredoxins are iron-sulfur proteins that transfer electrons in a wide variety of metabolic reactions. This ferredoxin probably participates in nitrogen fixation. The sequence is that of Ferredoxin-5 (fdxD) from Rhodobacter capsulatus (Rhodopseudomonas capsulata).